Here is a 274-residue protein sequence, read N- to C-terminus: Protein TIFY 11A (274 aa).

Disordered stretches follow at residues 49–95 (SLAL…SQPG) and 139–176 (PIND…QEQN). Residues 92 to 127 (SQPGSSQLTIFFGGKVLVYNEFPVDKAKEIMEVAKQ) enclose the Tify domain. Over residues 139–150 (PINDENNNNKSS) the composition is skewed to polar residues. The stretch at 161-185 (DNNHLTKEQQQQQEQNQIVERIARR) forms a coiled coil. The Jas motif lies at 182–206 (IARRASLHRFFAKRKDRAVARAPYQ). Positions 183–190 (ARRASLHR) match the Nuclear localization signal motif. Positions 206–274 (QVNQNAGHHR…QSSKDLDLRL (69 aa)) are disordered. Over residues 249 to 274 (IKSDGDKDDIMKIEEGQSSKDLDLRL) the composition is skewed to basic and acidic residues.

This sequence belongs to the TIFY/JAZ family. Homo- and heterodimer. Interacts with MYC2, MYC3, MYC4, AFPH2/NINJA, TIFY10A/JAZ1, TIFY10B/JAZ2, TIFY11B/JAZ6, TIFY5A/JAZ8 and TIFY3B/JAZ12. As to quaternary structure, (Microbial infection) Interacts with the pathogenic Pseudomonas syringae HopZ1a protein. In terms of processing, (Microbial infection) Acetylated by Pseudomonas syringae HopZ1a. Ubiquitinated. Targeted for degradation by the SCF(COI1) E3 ubiquitin ligase-proteasome pathway during jasmonate signaling.

The protein localises to the nucleus. Repressor of jasmonate responses. The protein is Protein TIFY 11A of Arabidopsis thaliana (Mouse-ear cress).